We begin with the raw amino-acid sequence, 463 residues long: Putative ankyrin repeat protein R579 (463 aa).

ANK repeat units follow at residues 124–154 (LKTDLMFYAVSKNVSIDVINFLIDMDCKCTI), 156–181 (SITRAIAEKKLDIAKIIIDHNPSENI), 242–271 (KEKNISSYVIQSNSLNVVKTFVEHGLQFNP), 273–299 (IYLWVNGNSESENIVRYIIELGIDYRP), 300–328 (HIDRLLKICITSGTFSHLEYLINLGVSQE), 329–355 (NINEAFLTAVSEDKFELIKYLIYMGAD), 356–385 (INYKNTIAASYTDNIDVLKYLIEKGADITT), and 387–416 (GSNDVINHAIGSHQSDFCRCLLENGATITL).

This is Putative ankyrin repeat protein R579 from Acanthamoeba polyphaga (Amoeba).